Consider the following 423-residue polypeptide: Glucose-1-phosphate adenylyltransferase 1 (423 aa).

Residues Tyr-111, Gly-176, 191–192, and Ser-209 each bind alpha-D-glucose 1-phosphate; that span reads EK.

Belongs to the bacterial/plant glucose-1-phosphate adenylyltransferase family. In terms of assembly, homotetramer.

It catalyses the reaction alpha-D-glucose 1-phosphate + ATP + H(+) = ADP-alpha-D-glucose + diphosphate. The protein operates within glycan biosynthesis; glycogen biosynthesis. Its function is as follows. Involved in the biosynthesis of ADP-glucose, a building block required for the elongation reactions to produce glycogen. Catalyzes the reaction between ATP and alpha-D-glucose 1-phosphate (G1P) to produce pyrophosphate and ADP-Glc. The sequence is that of Glucose-1-phosphate adenylyltransferase 1 from Alkalilimnicola ehrlichii (strain ATCC BAA-1101 / DSM 17681 / MLHE-1).